Consider the following 126-residue polypeptide: Large ribosomal subunit protein bL12 (126 aa).

Positions 104 to 116 are enriched in basic and acidic residues; it reads AKKEDAEKAKAQL. Positions 104 to 126 are disordered; sequence AKKEDAEKAKAQLEEAGATVELK. The span at 117 to 126 shows a compositional bias: low complexity; it reads EEAGATVELK.

Belongs to the bacterial ribosomal protein bL12 family. As to quaternary structure, homodimer. Part of the ribosomal stalk of the 50S ribosomal subunit. Forms a multimeric L10(L12)X complex, where L10 forms an elongated spine to which 2 to 4 L12 dimers bind in a sequential fashion. Binds GTP-bound translation factors.

Forms part of the ribosomal stalk which helps the ribosome interact with GTP-bound translation factors. Is thus essential for accurate translation. The chain is Large ribosomal subunit protein bL12 from Bifidobacterium animalis subsp. lactis (strain AD011).